Consider the following 294-residue polypeptide: Glutamyl-Q tRNA(Asp) synthetase (294 aa).

L-glutamate-binding positions include 8–12 and Glu44; that span reads RFAPT. The short motif at 11–21 is the 'HIGH' region element; the sequence is PTPSGYLHFGS. Residues Cys100, Cys102, Tyr114, and Cys118 each contribute to the Zn(2+) site. Residues Tyr171 and Arg189 each coordinate L-glutamate. A 'KMSKS' region motif is present at residues 227–231; that stretch reads KLGKS. Lys230 lines the ATP pocket.

Belongs to the class-I aminoacyl-tRNA synthetase family. GluQ subfamily. Zn(2+) serves as cofactor.

Its function is as follows. Catalyzes the tRNA-independent activation of glutamate in presence of ATP and the subsequent transfer of glutamate onto a tRNA(Asp). Glutamate is transferred on the 2-amino-5-(4,5-dihydroxy-2-cyclopenten-1-yl) moiety of the queuosine in the wobble position of the QUC anticodon. The chain is Glutamyl-Q tRNA(Asp) synthetase from Ectopseudomonas mendocina (strain ymp) (Pseudomonas mendocina).